We begin with the raw amino-acid sequence, 344 residues long: Arginine N-succinyltransferase (344 aa).

L125 provides a ligand contact to succinyl-CoA. The active-site Proton donor is the H229.

Belongs to the arginine N-succinyltransferase family.

The enzyme catalyses succinyl-CoA + L-arginine = N(2)-succinyl-L-arginine + CoA + H(+). It functions in the pathway amino-acid degradation; L-arginine degradation via AST pathway; L-glutamate and succinate from L-arginine: step 1/5. Catalyzes the transfer of succinyl-CoA to arginine to produce N(2)-succinylarginine. The sequence is that of Arginine N-succinyltransferase from Escherichia coli O6:K15:H31 (strain 536 / UPEC).